The sequence spans 822 residues: Probable phosphoketolase (822 aa).

It belongs to the XFP family. Thiamine diphosphate is required as a cofactor.

The chain is Probable phosphoketolase from Nocardia farcinica (strain IFM 10152).